The following is a 448-amino-acid chain: tRNA modification GTPase MnmE (448 aa).

Residues Arg-25, Glu-82, and Lys-121 each contribute to the (6S)-5-formyl-5,6,7,8-tetrahydrofolate site. A TrmE-type G domain is found at 217 to 372 (GLTTVIAGRP…LRQEIIRRAG (156 aa)). Asn-227 is a K(+) binding site. GTP is bound by residues 227 to 232 (NVGKSS), 246 to 252 (TEIPGTT), 271 to 274 (DTAG), and 353 to 355 (SAR). Residue Ser-231 participates in Mg(2+) binding. Residues Thr-246, Ile-248, and Thr-251 each coordinate K(+). Thr-252 is a binding site for Mg(2+). Lys-448 is a (6S)-5-formyl-5,6,7,8-tetrahydrofolate binding site.

The protein belongs to the TRAFAC class TrmE-Era-EngA-EngB-Septin-like GTPase superfamily. TrmE GTPase family. In terms of assembly, homodimer. Heterotetramer of two MnmE and two MnmG subunits. K(+) serves as cofactor.

Its subcellular location is the cytoplasm. Functionally, exhibits a very high intrinsic GTPase hydrolysis rate. Involved in the addition of a carboxymethylaminomethyl (cmnm) group at the wobble position (U34) of certain tRNAs, forming tRNA-cmnm(5)s(2)U34. The polypeptide is tRNA modification GTPase MnmE (Methylococcus capsulatus (strain ATCC 33009 / NCIMB 11132 / Bath)).